The primary structure comprises 125 residues: Small ribosomal subunit protein bS6 (125 aa).

The segment at 99-125 (ASPMVKAREERKPLTEVENNDFEDAEE) is disordered. The span at 104-113 (KAREERKPLT) shows a compositional bias: basic and acidic residues. Acidic residues predominate over residues 116-125 (ENNDFEDAEE).

Belongs to the bacterial ribosomal protein bS6 family.

Binds together with bS18 to 16S ribosomal RNA. This is Small ribosomal subunit protein bS6 from Histophilus somni (strain 2336) (Haemophilus somnus).